Reading from the N-terminus, the 318-residue chain is Olfactory receptor-like protein COR3 (318 aa).

The Extracellular segment spans residues 1 to 26; sequence MASGNCTTPTTFILSGLTDNPGLQMP. Asn-5 is a glycosylation site (N-linked (GlcNAc...) asparagine). The helical transmembrane segment at 27–49 threads the bilayer; sequence LFMVFLAIYTITLLTNLGLIRLI. At 50-57 the chain is on the cytoplasmic side; that stretch reads SVDLHLQT. The helical transmembrane segment at 58-79 threads the bilayer; sequence PMYIFLQNLSFTDAAYSTVITP. Over 80–100 the chain is Extracellular; sequence KMLATFLEERKTISYVGCILQ. A disulfide bridge connects residues Cys-97 and Cys-179. Residues 101-120 traverse the membrane as a helical segment; the sequence is YFSFVLLTTSECLLLAVMAY. The Cytoplasmic portion of the chain corresponds to 121–139; sequence DRYVAICKPLLYPAIMTKA. A helical membrane pass occupies residues 140–164; that stretch reads VCWRLVESLYFLAFLNSLVHTCGLL. Over 165–205 the chain is Extracellular; the sequence is KLSFCYSNVVNHFFCDISPLFQISSSSIAISELLVIISGSL. A helical transmembrane segment spans residues 206-226; the sequence is FVMSSIIIILISYVFIILTVV. Topologically, residues 227-239 are cytoplasmic; the sequence is MIRSKDGKYKAFS. Residues 240–260 traverse the membrane as a helical segment; the sequence is TCTSHLMAVSLFHGTVIFMYL. The Extracellular portion of the chain corresponds to 261–271; that stretch reads RPVKLFSLDTD. Residues 272-292 traverse the membrane as a helical segment; the sequence is KIASLFYTVVIPMLNPLIYSW. The Cytoplasmic segment spans residues 293–318; that stretch reads RNKEVKDALRRLTATTFGFIDSKAVQ.

It belongs to the G-protein coupled receptor 1 family.

The protein localises to the cell membrane. Functionally, odorant receptor. The protein is Olfactory receptor-like protein COR3 (COR3) of Gallus gallus (Chicken).